A 337-amino-acid chain; its full sequence is GTP 3',8-cyclase (337 aa).

Positions 1–226 (MNRVDYLRIS…REKIRQKWGL (226 aa)) constitute a Radical SAM core domain. R8 is a binding site for GTP. C15 and C19 together coordinate [4Fe-4S] cluster. Y21 provides a ligand contact to S-adenosyl-L-methionine. [4Fe-4S] cluster is bound at residue C22. R60 provides a ligand contact to GTP. G64 is an S-adenosyl-L-methionine binding site. T91 is a GTP binding site. Residue S115 coordinates S-adenosyl-L-methionine. GTP is bound at residue K155. M189 is a binding site for S-adenosyl-L-methionine. [4Fe-4S] cluster is bound by residues C260 and C263. 265 to 267 (RMR) lines the GTP pocket. A [4Fe-4S] cluster-binding site is contributed by C277.

Belongs to the radical SAM superfamily. MoaA family. As to quaternary structure, monomer and homodimer. It depends on [4Fe-4S] cluster as a cofactor.

The catalysed reaction is GTP + AH2 + S-adenosyl-L-methionine = (8S)-3',8-cyclo-7,8-dihydroguanosine 5'-triphosphate + 5'-deoxyadenosine + L-methionine + A + H(+). The protein operates within cofactor biosynthesis; molybdopterin biosynthesis. Its function is as follows. Catalyzes the cyclization of GTP to (8S)-3',8-cyclo-7,8-dihydroguanosine 5'-triphosphate. The protein is GTP 3',8-cyclase of Crocosphaera subtropica (strain ATCC 51142 / BH68) (Cyanothece sp. (strain ATCC 51142)).